Here is a 67-residue protein sequence, read N- to C-terminus: Potassium channel toxin alpha-KTx 6.16 (67 aa).

The signal sequence occupies residues Met1–Ser24. 4 disulfide bridges follow: Cys34-Cys55, Cys40-Cys60, Cys44-Cys62, and Cys50-Cys65.

This sequence belongs to the short scorpion toxin superfamily. Potassium channel inhibitor family. Alpha-KTx 06 subfamily. In terms of tissue distribution, expressed by the venom gland.

It localises to the secreted. Its function is as follows. Inhibits voltage-gated potassium channels. This Opisthacanthus cayaporum (South American scorpion) protein is Potassium channel toxin alpha-KTx 6.16.